Reading from the N-terminus, the 262-residue chain is tRNA pseudouridine synthase A (262 aa).

Asp55 (nucleophile) is an active-site residue. Tyr116 provides a ligand contact to substrate.

Belongs to the tRNA pseudouridine synthase TruA family. In terms of assembly, homodimer.

The catalysed reaction is uridine(38/39/40) in tRNA = pseudouridine(38/39/40) in tRNA. In terms of biological role, formation of pseudouridine at positions 38, 39 and 40 in the anticodon stem and loop of transfer RNAs. The protein is tRNA pseudouridine synthase A of Bdellovibrio bacteriovorus (strain ATCC 15356 / DSM 50701 / NCIMB 9529 / HD100).